Reading from the N-terminus, the 290-residue chain is Diaminopimelate epimerase (290 aa).

Residues Asn11 and Asn78 each coordinate substrate. Cys87 serves as the catalytic Proton donor. Substrate-binding positions include Gly88–Asn89, Asn163, Asn199, and Glu217–Arg218. The active-site Proton acceptor is Cys226. A substrate-binding site is contributed by Gly227–Thr228.

It belongs to the diaminopimelate epimerase family. As to quaternary structure, homodimer.

The protein localises to the cytoplasm. It carries out the reaction (2S,6S)-2,6-diaminopimelate = meso-2,6-diaminopimelate. It functions in the pathway amino-acid biosynthesis; L-lysine biosynthesis via DAP pathway; DL-2,6-diaminopimelate from LL-2,6-diaminopimelate: step 1/1. Its function is as follows. Catalyzes the stereoinversion of LL-2,6-diaminopimelate (L,L-DAP) to meso-diaminopimelate (meso-DAP), a precursor of L-lysine and an essential component of the bacterial peptidoglycan. This is Diaminopimelate epimerase from Mycobacterium ulcerans (strain Agy99).